The sequence spans 261 residues: Probable glutathione-independent glyoxalase hsp3103 (261 aa).

Active-site residues include C162, H163, and E196.

This sequence belongs to the peptidase C56 family. HSP31-like subfamily.

The catalysed reaction is methylglyoxal + H2O = (R)-lactate + H(+). In terms of biological role, catalyzes the conversion of methylglyoxal (MG) to D-lactate in a single glutathione (GSH)-independent step. May play a role in detoxifying endogenously produced glyoxals. Involved in protection against reactive oxygen species (ROS). The chain is Probable glutathione-independent glyoxalase hsp3103 from Schizosaccharomyces pombe (strain 972 / ATCC 24843) (Fission yeast).